Here is a 281-residue protein sequence, read N- to C-terminus: Elongation factor Ts (281 aa).

The interval 86–89 (TDFV) is involved in Mg(2+) ion dislocation from EF-Tu.

Belongs to the EF-Ts family.

The protein localises to the cytoplasm. Associates with the EF-Tu.GDP complex and induces the exchange of GDP to GTP. It remains bound to the aminoacyl-tRNA.EF-Tu.GTP complex up to the GTP hydrolysis stage on the ribosome. The chain is Elongation factor Ts from Beutenbergia cavernae (strain ATCC BAA-8 / DSM 12333 / CCUG 43141 / JCM 11478 / NBRC 16432 / NCIMB 13614 / HKI 0122).